We begin with the raw amino-acid sequence, 292 residues long: UDP-N-acetylenolpyruvoylglucosamine reductase (292 aa).

The FAD-binding PCMH-type domain occupies 21-186; sequence QAGGLVDYLA…ISATFELQPD (166 aa). The active site involves R165. Catalysis depends on S215, which acts as the Proton donor. E285 is a catalytic residue.

This sequence belongs to the MurB family. FAD is required as a cofactor.

It is found in the cytoplasm. The enzyme catalyses UDP-N-acetyl-alpha-D-muramate + NADP(+) = UDP-N-acetyl-3-O-(1-carboxyvinyl)-alpha-D-glucosamine + NADPH + H(+). It participates in cell wall biogenesis; peptidoglycan biosynthesis. Cell wall formation. In Leuconostoc mesenteroides subsp. mesenteroides (strain ATCC 8293 / DSM 20343 / BCRC 11652 / CCM 1803 / JCM 6124 / NCDO 523 / NBRC 100496 / NCIMB 8023 / NCTC 12954 / NRRL B-1118 / 37Y), this protein is UDP-N-acetylenolpyruvoylglucosamine reductase.